Here is a 213-residue protein sequence, read N- to C-terminus: MAANKSYKSYFLDPLWGNNQPLIAILGICSALAVTTTVNTAITMGLAVSFVTGCSSFFVSLLRKATPDSVRMITQLIIISLFVIVIDQFLKAFFFTISKTLSVFVGLIITNCIVMGRAESLARNVPPIPAFLDGLASGLGYGWVLVTVSIVREFFGFGTILGLQLIPKCFYASETHPDGYENFGLMVLAPSAFFLLGIMIWGVNILRSKKAKR.

Helical transmembrane passes span 21 to 41 (PLIA…VNTA), 42 to 62 (ITMG…VSLL), 69 to 86 (SVRM…VIVI), 101 to 121 (LSVF…AESL), 131 to 151 (FLDG…VSIV), and 183 to 203 (FGLM…IWGV).

This sequence belongs to the NqrDE/RnfAE family. In terms of assembly, composed of six subunits; NqrA, NqrB, NqrC, NqrD, NqrE and NqrF.

It localises to the cell inner membrane. It carries out the reaction a ubiquinone + n Na(+)(in) + NADH + H(+) = a ubiquinol + n Na(+)(out) + NAD(+). Functionally, NQR complex catalyzes the reduction of ubiquinone-1 to ubiquinol by two successive reactions, coupled with the transport of Na(+) ions from the cytoplasm to the periplasm. NqrA to NqrE are probably involved in the second step, the conversion of ubisemiquinone to ubiquinol. The protein is Na(+)-translocating NADH-quinone reductase subunit D of Chlamydia caviae (strain ATCC VR-813 / DSM 19441 / 03DC25 / GPIC) (Chlamydophila caviae).